The following is a 1044-amino-acid chain: Pre-mRNA-splicing factor ATP-dependent RNA helicase DEAH1 (1044 aa).

Positions 106-206 (EVVVEKKSSV…TLSKKEKEEA (101 aa)) are disordered. The span at 108 to 121 (VVEKKSSVSESRKS) shows a compositional bias: basic and acidic residues. Over residues 122–132 (DKGKKRFRKKS) the composition is skewed to basic residues. Residues S135 and S138 each carry the phosphoserine modification. Acidic residues predominate over residues 157 to 166 (EEDDGSESEE). Residues 167-206 (ERVRDQKEREELEQHLKDRDTARTRKLTEQTLSKKEKEEA) are compositionally biased toward basic and acidic residues. In terms of domain architecture, Helicase ATP-binding spans 414–577 (LKAVEEHQVL…FDTAPIFSFP (164 aa)). 427 to 434 (GDTGSGKT) contributes to the ATP binding site. Positions 524 to 527 (DEAH) match the DEAH box motif. The Helicase C-terminal domain occupies 600–775 (IVTILTIHVR…SVVLALKSLG (176 aa)).

Belongs to the DEAD box helicase family. DEAH subfamily. PRP2 sub-subfamily. Widely expressed.

The catalysed reaction is ATP + H2O = ADP + phosphate + H(+). In terms of biological role, involved in pre-mRNA splicing. The protein is Pre-mRNA-splicing factor ATP-dependent RNA helicase DEAH1 of Arabidopsis thaliana (Mouse-ear cress).